A 250-amino-acid chain; its full sequence is ATP synthase subunit a (250 aa).

6 helical membrane-spanning segments follow: residues 26-46 (FTNA…FLYL), 84-104 (FFPM…LGMF), 114-134 (IIVT…YGFY), 143-163 (LFVP…IEVI), 193-213 (FVAS…LPLI), and 216-236 (VALT…FAVL).

It belongs to the ATPase A chain family. F-type ATPases have 2 components, CF(1) - the catalytic core - and CF(0) - the membrane proton channel. CF(1) has five subunits: alpha(3), beta(3), gamma(1), delta(1), epsilon(1). CF(0) has three main subunits: a(1), b(2) and c(9-12). The alpha and beta chains form an alternating ring which encloses part of the gamma chain. CF(1) is attached to CF(0) by a central stalk formed by the gamma and epsilon chains, while a peripheral stalk is formed by the delta and b chains.

Its subcellular location is the cell inner membrane. Functionally, key component of the proton channel; it plays a direct role in the translocation of protons across the membrane. This is ATP synthase subunit a from Sinorhizobium fredii (strain NBRC 101917 / NGR234).